The chain runs to 329 residues: MLSSLNVLQSSFRGKTALSNSTLLQKVSFAGKEYPLEPIDEKTPILFQWFEARPERYEKGEVPILNTKEHPYLSNIINAAKIENERIIGVLVDGNFTYEQKKEFLSLENEYQNIKIIYRADVDFSMYDKKLSDIYLENIHKQESYPASERDNYLLGLLREELKNIPEGKDSLIESYAEKREHTWFDFFRNLAMLKAGSLFTETGKTGCHNISPCSGCIYLDADMIITDKLGVLYAPDGIAVHVDCNDEIKSLENGAIVVNRSNHPALLAGLDIMKSKVDAHPYYDGLGKGIKRHFNYSSLHDYNAFCDFIEFKHENIIPNTSMYTCSSW.

Residue arginine 13 is glycosylated (N-beta-linked (GlcNAc) arginine; by autocatalysis). 48-50 lines the UDP-N-acetyl-alpha-D-glucosamine pocket; sequence QWF. The N-beta-linked (GlcNAc) arginine; by autocatalysis glycan is linked to arginine 53. Tyrosine 72 is a binding site for UDP-N-acetyl-alpha-D-glucosamine. Residue arginine 159 is glycosylated (N-beta-linked (GlcNAc) arginine; by autocatalysis). UDP-N-acetyl-alpha-D-glucosamine is bound at residue 219–222; that stretch reads YLDA. Positions 221 to 223 match the DXD motif motif; it reads DAD. Residue aspartate 223 coordinates Mn(2+). The active-site Proton acceptor is the glutamate 253. Arginine 293 carries an N-beta-linked (GlcNAc) arginine; by autocatalysis glycan. Mn(2+)-binding residues include asparagine 320 and serine 322. UDP-N-acetyl-alpha-D-glucosamine is bound by residues serine 322 and 327–329; that span reads SSW.

Belongs to the glycosyltransferase NleB family. The cofactor is Mn(2+). Post-translationally, auto-glycosylated: arginine GlcNAcylation is required for activity toward death domain-containing host target proteins.

The protein resides in the secreted. It is found in the host cytoplasm. It catalyses the reaction L-arginyl-[protein] + UDP-N-acetyl-alpha-D-glucosamine = N(omega)-(N-acetyl-beta-D-glucosaminyl)-L-arginyl-[protein] + UDP + H(+). Protein-arginine N-acetylglucosaminyltransferase activity is inhibited by 100066N compound (flavone analog) and 102644N compound (a substituted isoxazole). Functionally, protein-arginine N-acetylglucosaminyltransferase effector that disrupts TNF signaling in infected cells, including NF-kappa-B signaling, apoptosis and necroptosis. Acts by catalyzing the transfer of a single N-acetylglucosamine (GlcNAc) to a conserved arginine residue in the death domain of host proteins such as FADD: arginine GlcNAcylation prevents homotypic/heterotypic death domain interactions and assembly of the oligomeric TNF-alpha receptor complex, thereby disrupting TNF signaling. Also acts on host proteins without a death domain: catalyzes arginine GlcNAcylation of host GAPDH protein, thereby preventing GAPDH interaction with TRAF2, leading to inhibit NF-kappa-B signaling. Catalyzes auto-GlcNAcylation, which is required for activity toward death domain-containing host target proteins. This is Protein-arginine N-acetylglucosaminyltransferase NleB1 from Escherichia coli O157:H7.